A 545-amino-acid chain; its full sequence is Adenine deaminase (545 aa).

The protein belongs to the metallo-dependent hydrolases superfamily. Adenine deaminase family. It depends on Mn(2+) as a cofactor.

The enzyme catalyses adenine + H2O + H(+) = hypoxanthine + NH4(+). The sequence is that of Adenine deaminase from Parabacteroides distasonis (strain ATCC 8503 / DSM 20701 / CIP 104284 / JCM 5825 / NCTC 11152).